A 217-amino-acid chain; its full sequence is Probable transaldolase (217 aa).

Lysine 83 functions as the Schiff-base intermediate with substrate in the catalytic mechanism.

The protein belongs to the transaldolase family. Type 3B subfamily.

It is found in the cytoplasm. It carries out the reaction D-sedoheptulose 7-phosphate + D-glyceraldehyde 3-phosphate = D-erythrose 4-phosphate + beta-D-fructose 6-phosphate. It participates in carbohydrate degradation; pentose phosphate pathway; D-glyceraldehyde 3-phosphate and beta-D-fructose 6-phosphate from D-ribose 5-phosphate and D-xylulose 5-phosphate (non-oxidative stage): step 2/3. Its function is as follows. Transaldolase is important for the balance of metabolites in the pentose-phosphate pathway. This Anaeromyxobacter sp. (strain K) protein is Probable transaldolase.